Reading from the N-terminus, the 117-residue chain is uncharacterized protein (117 aa).

This is an uncharacterized protein from Saccharomyces cerevisiae (strain ATCC 204508 / S288c) (Baker's yeast).